We begin with the raw amino-acid sequence, 317 residues long: MTSTLHTTKKVLSIQSHVIHGYVGNKAATFPLQYRGWDVDVLNTVQFSNHSGYAHFTGFKCSTEELVDIVEKGLIGSLRIKYDAVLSGYLPNVQALQKVAGIVGQLCEGSENVKWILDPVLGDNGRLYVDRECVAVYQDILQNFKIFLATPNQFEMELLVGMSIRTLDDAKQAFKLFHKKYPRVSRIVVTSLELSEFLSNDTYVVAGFDCSASEEIFFYEIPKINAKFSGSGDLISAMLTDSLLGDRRCTQLSLSASLGQVLWLVTSILQKTYDLNIAERGPQDSTIDIKDLKLIQCRDILKQDLIPSIGKPKTIKI.

Substrate-binding residues include Ser-16 and Tyr-128. ATP-binding positions include 190-191 (TS) and 220-232 (EIPK…SGSG). Asp-233 is a binding site for substrate.

It belongs to the pyridoxine kinase family. A divalent metal cation is required as a cofactor.

The protein localises to the cytoplasm. It is found in the nucleus. It catalyses the reaction pyridoxal + ATP = pyridoxal 5'-phosphate + ADP + H(+). Functionally, required for synthesis of pyridoxal-5-phosphate from vitamin B6. Important for bud site selection. The chain is Putative pyridoxal kinase BUD17 (BUD17) from Saccharomyces cerevisiae (strain ATCC 204508 / S288c) (Baker's yeast).